The primary structure comprises 178 residues: ATP synthase subunit delta (178 aa).

The protein belongs to the ATPase delta chain family. As to quaternary structure, F-type ATPases have 2 components, F(1) - the catalytic core - and F(0) - the membrane proton channel. F(1) has five subunits: alpha(3), beta(3), gamma(1), delta(1), epsilon(1). F(0) has three main subunits: a(1), b(2) and c(10-14). The alpha and beta chains form an alternating ring which encloses part of the gamma chain. F(1) is attached to F(0) by a central stalk formed by the gamma and epsilon chains, while a peripheral stalk is formed by the delta and b chains.

The protein localises to the cell membrane. In terms of biological role, f(1)F(0) ATP synthase produces ATP from ADP in the presence of a proton or sodium gradient. F-type ATPases consist of two structural domains, F(1) containing the extramembraneous catalytic core and F(0) containing the membrane proton channel, linked together by a central stalk and a peripheral stalk. During catalysis, ATP synthesis in the catalytic domain of F(1) is coupled via a rotary mechanism of the central stalk subunits to proton translocation. Its function is as follows. This protein is part of the stalk that links CF(0) to CF(1). It either transmits conformational changes from CF(0) to CF(1) or is implicated in proton conduction. In Streptococcus pyogenes serotype M1, this protein is ATP synthase subunit delta.